Here is a 132-residue protein sequence, read N- to C-terminus: Small ribosomal subunit protein uS8 (132 aa).

It belongs to the universal ribosomal protein uS8 family. In terms of assembly, part of the 30S ribosomal subunit. Contacts proteins S5 and S12.

In terms of biological role, one of the primary rRNA binding proteins, it binds directly to 16S rRNA central domain where it helps coordinate assembly of the platform of the 30S subunit. This is Small ribosomal subunit protein uS8 from Borrelia turicatae (strain 91E135).